We begin with the raw amino-acid sequence, 382 residues long: Alkanesulfonate monooxygenase (382 aa).

This sequence belongs to the SsuD family.

It carries out the reaction an alkanesulfonate + FMNH2 + O2 = an aldehyde + FMN + sulfite + H2O + 2 H(+). Its function is as follows. Catalyzes the desulfonation of aliphatic sulfonates. The chain is Alkanesulfonate monooxygenase from Pseudomonas putida (strain ATCC 700007 / DSM 6899 / JCM 31910 / BCRC 17059 / LMG 24140 / F1).